The primary structure comprises 363 residues: Peptide chain release factor 2 (363 aa).

N5-methylglutamine is present on glutamine 251.

It belongs to the prokaryotic/mitochondrial release factor family. In terms of processing, methylated by PrmC. Methylation increases the termination efficiency of RF2.

The protein resides in the cytoplasm. Peptide chain release factor 2 directs the termination of translation in response to the peptide chain termination codons UGA and UAA. The chain is Peptide chain release factor 2 from Helicobacter pylori (strain P12).